Reading from the N-terminus, the 539-residue chain is Inositol 1,4,5-triphosphate receptor associated 2 (539 aa).

Disordered stretches follow at residues 1-21 (MLCVKGPPEQEPEDGALDVTR), 69-98 (YLTQPSSEQTSSSESTVTSSESGSDILHMA), and 147-171 (AGEELRTTENGGKGSAPGETEISMP). The Cytoplasmic segment spans residues 1–479 (MLCVKGPPEQ…LQASFRRANR (479 aa)). Residues 74–92 (SSEQTSSSESTVTSSESGS) are compositionally biased toward low complexity. T78 is modified (phosphothreonine). A coiled-coil region spans residues 298-326 (MIQHVENLKRMYAKEHAELEDLKQALLQN). Residues 334 to 353 (PDEDDCQIKKRSSSLNSKPS) form a disordered region. Residues S347, S354, and S408 each carry the phosphoserine modification. Residues 418–449 (ERSDVKARDAPEPQGEEAVERTRKPSLSERRS) are disordered. Basic and acidic residues predominate over residues 435–449 (AVERTRKPSLSERRS). The chain crosses the membrane as a helical; Anchor for type IV membrane protein span at residues 480-500 (ALWLTGLIIILIAALMSFLTG). Over 501–539 (QLFQTAVEAAPTQEGDSWLSLEHILWPFTRLGHDGPPPV) the chain is Lumenal.

Belongs to the IRAG2 family. Interacts (via coiled-coil domain) with ITPR3. Interacts with SUN1 and SUN2. Interacts with microtubules. Interacts with HCN4; regulates HCN4 channel activity. The removal of the C-terminal lumenal domain occurs by proteolytic processing. As to expression, spleen and thymus. Expressed at high levels in pre B-cells, mature B-cells and pre T-cells. Expressed at low levels in mature T-cells and plasma B-cells. Expressed in circumvallate (CV), foliate (FL) and fungiform (FF) taste papillae cells of the tongue epithelium.

Its subcellular location is the cytoplasm. The protein resides in the endoplasmic reticulum membrane. It is found in the nucleus envelope. It localises to the cytoskeleton. The protein localises to the microtubule organizing center. Its subcellular location is the centrosome. The protein resides in the spindle pole. It is found in the chromosome. Its function is as follows. Plays a role in the delivery of peptides to major histocompatibility complex (MHC) class I molecules; this occurs in a transporter associated with antigen processing (TAP)-independent manner. May play a role in taste signal transduction via ITPR3. May play a role during fertilization in pronucleus congression and fusion. Plays a role in maintaining nuclear shape, maybe as a component of the LINC complex and through interaction with microtubules. Plays a role in the regulation of cellular excitability by regulating the hyperpolarization-activated cyclic nucleotide-gated HCN4 channel activity. The sequence is that of Inositol 1,4,5-triphosphate receptor associated 2 (Irag2) from Mus musculus (Mouse).